The chain runs to 478 residues: tRNA(Ile)-lysidine synthase (478 aa).

An ATP-binding site is contributed by 27–32 (SGGSDS).

It belongs to the tRNA(Ile)-lysidine synthase family.

The protein localises to the cytoplasm. It carries out the reaction cytidine(34) in tRNA(Ile2) + L-lysine + ATP = lysidine(34) in tRNA(Ile2) + AMP + diphosphate + H(+). Ligates lysine onto the cytidine present at position 34 of the AUA codon-specific tRNA(Ile) that contains the anticodon CAU, in an ATP-dependent manner. Cytidine is converted to lysidine, thus changing the amino acid specificity of the tRNA from methionine to isoleucine. The protein is tRNA(Ile)-lysidine synthase of Rickettsia africae (strain ESF-5).